The chain runs to 1168 residues: Zinc finger CCHC domain-containing protein 2 (1168 aa).

Disordered stretches follow at residues 1-87 (MLRM…GGHA), 209-242 (EGSR…CAKL), 561-693 (KRSL…LGTE), and 932-978 (ATSA…SDST). Over residues 43–66 (PPPPPPTGLPRGPPPPPPSPPRGL) the composition is skewed to pro residues. Residues 67–78 (EPPVASGPTAGA) are compositionally biased toward low complexity. Residues 216-227 (EDEPGGDDEQDA) show a composition bias toward acidic residues. A compositionally biased stretch (gly residues) spans 233 to 242 (GPEGGGCAKL). The segment covering 574–588 (PQVEKEKIKKTENRL) has biased composition (basic and acidic residues). The span at 626–635 (SSESYSSPSS) shows a compositional bias: low complexity. Residues 636–655 (PRHDGRESLESEEEKDRDTD) show a composition bias toward basic and acidic residues. Over residues 932-949 (ATSAQPASTGISPAQSTV) the composition is skewed to polar residues. Over residues 951–965 (PAVPTHTPGPAPSPS) the composition is skewed to pro residues. Residues 966–978 (PALTHSTAQSDST) show a composition bias toward polar residues. The CCHC-type zinc-finger motif lies at 1121–1138 (VSCYNCGVSGHYAQDCKQ).

This Rattus norvegicus (Rat) protein is Zinc finger CCHC domain-containing protein 2 (Zcchc2).